A 296-amino-acid polypeptide reads, in one-letter code: Biliverdin reductase A (296 aa).

Residues 1-2 (MN) constitute a propeptide that is removed on maturation. Residues 16 to 19 (VGRA), 44 to 46 (SRR), 77 to 80 (SSSH), and tyrosine 98 each bind NADP(+). Threonine 174 is modified (phosphothreonine). 2 positions are modified to phosphoserine: serine 178 and serine 230. N6-acetyllysine occurs at positions 248 and 253. Histidine 280, cysteine 281, cysteine 292, and cysteine 293 together coordinate Zn(2+).

This sequence belongs to the Gfo/Idh/MocA family. Biliverdin reductase subfamily. Monomer. It depends on Zn(2+) as a cofactor. As to expression, liver.

The protein resides in the cytoplasm. It localises to the cytosol. The enzyme catalyses (4Z,15Z)-bilirubin IXalpha + NAD(+) = biliverdin IXalpha + NADH + H(+). It catalyses the reaction (4Z,15Z)-bilirubin IXalpha + NADP(+) = biliverdin IXalpha + NADPH + H(+). It functions in the pathway porphyrin-containing compound metabolism; protoheme degradation. Reduces the gamma-methene bridge of the open tetrapyrrole, biliverdin IXalpha, to bilirubin with the concomitant oxidation of a NADH or NADPH cofactor. Does not reduce bilirubin IXbeta. Uses the reactants NADH or NADPH depending on the pH; NADH is used at the acidic pH range (6-6.9) and NADPH at the alkaline range (8.5-8.7). NADPH, however, is the probable reactant in biological systems. In Homo sapiens (Human), this protein is Biliverdin reductase A.